We begin with the raw amino-acid sequence, 137 residues long: Transcription antitermination protein NusB (137 aa).

This sequence belongs to the NusB family.

In terms of biological role, involved in transcription antitermination. Required for transcription of ribosomal RNA (rRNA) genes. Binds specifically to the boxA antiterminator sequence of the ribosomal RNA (rrn) operons. The polypeptide is Transcription antitermination protein NusB (Finegoldia magna (strain ATCC 29328 / DSM 20472 / WAL 2508) (Peptostreptococcus magnus)).